Reading from the N-terminus, the 327-residue chain is Probable serine/threonine-protein kinase WNK5 (327 aa).

The disordered stretch occupies residues 1 to 48 (MPPNPTPPRRATTTTTRATSGVRRGEEEQGGMAVSASAGEEEEAFEEV). A compositionally biased stretch (low complexity) spans 9 to 19 (RRATTTTTRAT). Residues 39–48 (GEEEEAFEEV) are compositionally biased toward acidic residues. One can recognise a Protein kinase domain in the interval 55–314 (GRYADVLGLG…AAELLRDPFF (260 aa)). ATP is bound at residue 136-139 (TEVC). D203 acts as the Proton acceptor in catalysis.

This sequence belongs to the protein kinase superfamily. Ser/Thr protein kinase family. WNK subfamily.

It catalyses the reaction L-seryl-[protein] + ATP = O-phospho-L-seryl-[protein] + ADP + H(+). It carries out the reaction L-threonyl-[protein] + ATP = O-phospho-L-threonyl-[protein] + ADP + H(+). This chain is Probable serine/threonine-protein kinase WNK5 (WNK5), found in Oryza sativa subsp. japonica (Rice).